The sequence spans 345 residues: tRNA pseudouridine synthase B (345 aa).

Asp-39 serves as the catalytic Nucleophile.

Belongs to the pseudouridine synthase TruB family. Type 1 subfamily.

It catalyses the reaction uridine(55) in tRNA = pseudouridine(55) in tRNA. In terms of biological role, responsible for synthesis of pseudouridine from uracil-55 in the psi GC loop of transfer RNAs. The polypeptide is tRNA pseudouridine synthase B (Rickettsia peacockii (strain Rustic)).